The primary structure comprises 1412 residues: DNA-directed RNA polymerase subunit beta' (1412 aa).

4 residues coordinate Zn(2+): C70, C72, C85, and C88. D460, D462, and D464 together coordinate Mg(2+). Positions 819, 893, 900, and 903 each coordinate Zn(2+). The interval 1391 to 1412 (AEESFEFGTPETPAAEQQHSGE) is disordered.

This sequence belongs to the RNA polymerase beta' chain family. The RNAP catalytic core consists of 2 alpha, 1 beta, 1 beta' and 1 omega subunit. When a sigma factor is associated with the core the holoenzyme is formed, which can initiate transcription. It depends on Mg(2+) as a cofactor. The cofactor is Zn(2+).

The enzyme catalyses RNA(n) + a ribonucleoside 5'-triphosphate = RNA(n+1) + diphosphate. DNA-dependent RNA polymerase catalyzes the transcription of DNA into RNA using the four ribonucleoside triphosphates as substrates. The protein is DNA-directed RNA polymerase subunit beta' of Paraburkholderia phytofirmans (strain DSM 17436 / LMG 22146 / PsJN) (Burkholderia phytofirmans).